Reading from the N-terminus, the 1101-residue chain is Translation initiation factor IF-2 (1101 aa).

2 disordered regions span residues 81 to 437 (QEIL…EDDF) and 452 to 509 (SIST…QRAE). Residues 93–108 (PFSSTDAPVGSGQSSP) are compositionally biased toward polar residues. Positions 110 to 124 (IEPPRPPMKPQPPSP) are enriched in pro residues. Composition is skewed to polar residues over residues 128–149 (EVTS…GSSS) and 157–184 (SPMS…QLKY). A compositionally biased stretch (low complexity) spans 185–196 (NQEQSNQLEQES). Polar residues predominate over residues 197–206 (AISSELSEVN). Composition is skewed to basic and acidic residues over residues 228–237 (SKEKEAKSNE), 248–288 (KENK…DKKS), and 295–340 (VKRE…ELKR). A compositionally biased stretch (acidic residues) spans 361–378 (EPEDVEDTAEDLLEEDPL). Basic residues-rich tracts occupy residues 385–397 (PKLK…KVGK) and 414–428 (KAGK…KRRQ). The span at 484–506 (EPGRGKSAERERSERKDRKEQPQ) shows a compositional bias: basic and acidic residues. The region spanning 592–765 (RRPPVVTIMG…LLVAEVGELS (174 aa)) is the tr-type G domain. Residues 601 to 608 (GHVDHGKT) are G1. Residue 601–608 (GHVDHGKT) coordinates GTP. Residues 626–630 (GITQH) form a G2 region. Residues 651 to 654 (DTPG) form a G3 region. GTP-binding positions include 651–655 (DTPGH) and 705–708 (NKID). A G4 region spans residues 705–708 (NKID). Residues 741–743 (SAL) form a G5 region.

This sequence belongs to the TRAFAC class translation factor GTPase superfamily. Classic translation factor GTPase family. IF-2 subfamily.

Its subcellular location is the cytoplasm. In terms of biological role, one of the essential components for the initiation of protein synthesis. Protects formylmethionyl-tRNA from spontaneous hydrolysis and promotes its binding to the 30S ribosomal subunits. Also involved in the hydrolysis of GTP during the formation of the 70S ribosomal complex. In Gloeothece citriformis (strain PCC 7424) (Cyanothece sp. (strain PCC 7424)), this protein is Translation initiation factor IF-2.